The following is a 487-amino-acid chain: DEAD-box ATP-dependent RNA helicase CshA (487 aa).

The Q motif motif lies at isoleucine 3–alanine 31. The Helicase ATP-binding domain maps to isoleucine 34–valine 204. Alanine 47–threonine 54 is a binding site for ATP. Residues aspartate 152–aspartate 155 carry the DEAD box motif. The 161-residue stretch at asparagine 215 to alanine 375 folds into the Helicase C-terminal domain. Residues aspartate 428 to leucine 440 are compositionally biased toward basic and acidic residues. A disordered region spans residues aspartate 428 to serine 487. Residues arginine 441–lysine 454 show a composition bias toward basic residues. Residues serine 469–arginine 479 show a composition bias toward basic and acidic residues.

This sequence belongs to the DEAD box helicase family. CshA subfamily. In terms of assembly, oligomerizes, may be a member of the RNA degradosome.

The protein resides in the cytoplasm. The catalysed reaction is ATP + H2O = ADP + phosphate + H(+). In terms of biological role, DEAD-box RNA helicase possibly involved in RNA degradation. Unwinds dsRNA in both 5'- and 3'-directions, has RNA-dependent ATPase activity. In Bacillus licheniformis (strain ATCC 14580 / DSM 13 / JCM 2505 / CCUG 7422 / NBRC 12200 / NCIMB 9375 / NCTC 10341 / NRRL NRS-1264 / Gibson 46), this protein is DEAD-box ATP-dependent RNA helicase CshA.